Reading from the N-terminus, the 72-residue chain is Variant surface glycoprotein MITAT 1.1000BC (72 aa).

D50 carries the GPI-anchor amidated aspartate lipid modification. A propeptide spans 51-72 (GSFLVNKKFALMVYDFVSLLAF) (removed in mature form).

It localises to the cell membrane. VSG forms a coat on the surface of the parasite. The trypanosome evades the immune response of the host by expressing a series of antigenically distinct VSGs from an estimated 1000 VSG genes. This chain is Variant surface glycoprotein MITAT 1.1000BC, found in Trypanosoma brucei brucei.